A 1129-amino-acid chain; its full sequence is Ubiquitin carboxyl-terminal hydrolase 7 (1129 aa).

Residues 29–169 (EGHLALDIER…DDVIRLRCRF (141 aa)) enclose the MATH domain. The 311-residue stretch at 190 to 500 (IGLRNQGATC…SAYMLVYVRD (311 aa)) folds into the USP domain. The active-site Nucleophile is the cysteine 199. Histidine 439 acts as the Proton acceptor in catalysis.

Belongs to the peptidase C19 family.

It localises to the nucleus. It carries out the reaction Thiol-dependent hydrolysis of ester, thioester, amide, peptide and isopeptide bonds formed by the C-terminal Gly of ubiquitin (a 76-residue protein attached to proteins as an intracellular targeting signal).. In terms of biological role, hydrolase that deubiquitinates target proteins. In Caenorhabditis briggsae, this protein is Ubiquitin carboxyl-terminal hydrolase 7.